The primary structure comprises 437 residues: GTPase Obg (437 aa).

Residues 2–160 (SMFLDTAKIS…RELQLELKIL (159 aa)) form the Obg domain. The interval 127-146 (GNIRFATPRNPAPEIAENGE) is disordered. The region spanning 161 to 338 (ADVGLVGFPS…LLEATAELLD (178 aa)) is the OBG-type G domain. GTP is bound by residues 167–174 (GFPSVGKS), 192–196 (FTTIV), 214–217 (DLPG), 284–287 (NKMD), and 319–321 (SSL). Mg(2+)-binding residues include Ser-174 and Thr-194. Residues 359–437 (GFNEEERPFE…IGNFEFEFVD (79 aa)) enclose the OCT domain.

It belongs to the TRAFAC class OBG-HflX-like GTPase superfamily. OBG GTPase family. Monomer. Mg(2+) serves as cofactor.

Its subcellular location is the cytoplasm. Functionally, an essential GTPase which binds GTP, GDP and possibly (p)ppGpp with moderate affinity, with high nucleotide exchange rates and a fairly low GTP hydrolysis rate. Plays a role in control of the cell cycle, stress response, ribosome biogenesis and in those bacteria that undergo differentiation, in morphogenesis control. The polypeptide is GTPase Obg (Streptococcus thermophilus (strain ATCC BAA-491 / LMD-9)).